Consider the following 553-residue polypeptide: Methionine--tRNA ligase (553 aa).

The 'HIGH' region signature appears at 12-22; sequence PYANSQLHLGH. The Zn(2+) site is built by Cys-144, Cys-147, Cys-157, and Cys-160. A 'KMSKS' region motif is present at residues 332 to 336; sequence KFSKS. Residue Lys-335 coordinates ATP.

Belongs to the class-I aminoacyl-tRNA synthetase family. MetG type 1 subfamily. In terms of assembly, monomer. Zn(2+) serves as cofactor.

The protein resides in the cytoplasm. It catalyses the reaction tRNA(Met) + L-methionine + ATP = L-methionyl-tRNA(Met) + AMP + diphosphate. Is required not only for elongation of protein synthesis but also for the initiation of all mRNA translation through initiator tRNA(fMet) aminoacylation. The sequence is that of Methionine--tRNA ligase from Dehalococcoides mccartyi (strain ATCC BAA-2100 / JCM 16839 / KCTC 5957 / BAV1).